A 689-amino-acid chain; its full sequence is Glycine--tRNA ligase beta subunit (689 aa).

Belongs to the class-II aminoacyl-tRNA synthetase family. As to quaternary structure, tetramer of two alpha and two beta subunits.

It localises to the cytoplasm. The catalysed reaction is tRNA(Gly) + glycine + ATP = glycyl-tRNA(Gly) + AMP + diphosphate. This is Glycine--tRNA ligase beta subunit from Coxiella burnetii (strain Dugway 5J108-111).